The primary structure comprises 473 residues: Siroheme synthase (473 aa).

Residues 1-203 form a precorrin-2 dehydrogenase /sirohydrochlorin ferrochelatase region; it reads MQYLPIFTKL…GDTQAAEQQL (203 aa). Residues 22-23 and 43-44 each bind NAD(+); these read DV and PK. Residue S128 is modified to Phosphoserine. A uroporphyrinogen-III C-methyltransferase region spans residues 215-473; it reads GEVYVVGAGP…SFAQPLTDVA (259 aa). P224 lines the S-adenosyl-L-methionine pocket. The active-site Proton acceptor is D247. K269 functions as the Proton donor in the catalytic mechanism. Residues 300 to 302, I305, 330 to 331, M382, and G411 each bind S-adenosyl-L-methionine; these read GGD and TA.

The protein in the N-terminal section; belongs to the precorrin-2 dehydrogenase / sirohydrochlorin ferrochelatase family. In the C-terminal section; belongs to the precorrin methyltransferase family.

The catalysed reaction is uroporphyrinogen III + 2 S-adenosyl-L-methionine = precorrin-2 + 2 S-adenosyl-L-homocysteine + H(+). It catalyses the reaction precorrin-2 + NAD(+) = sirohydrochlorin + NADH + 2 H(+). It carries out the reaction siroheme + 2 H(+) = sirohydrochlorin + Fe(2+). The protein operates within cofactor biosynthesis; adenosylcobalamin biosynthesis; precorrin-2 from uroporphyrinogen III: step 1/1. It participates in cofactor biosynthesis; adenosylcobalamin biosynthesis; sirohydrochlorin from precorrin-2: step 1/1. It functions in the pathway porphyrin-containing compound metabolism; siroheme biosynthesis; precorrin-2 from uroporphyrinogen III: step 1/1. Its pathway is porphyrin-containing compound metabolism; siroheme biosynthesis; siroheme from sirohydrochlorin: step 1/1. The protein operates within porphyrin-containing compound metabolism; siroheme biosynthesis; sirohydrochlorin from precorrin-2: step 1/1. Its function is as follows. Multifunctional enzyme that catalyzes the SAM-dependent methylations of uroporphyrinogen III at position C-2 and C-7 to form precorrin-2 via precorrin-1. Then it catalyzes the NAD-dependent ring dehydrogenation of precorrin-2 to yield sirohydrochlorin. Finally, it catalyzes the ferrochelation of sirohydrochlorin to yield siroheme. The protein is Siroheme synthase of Pseudoalteromonas translucida (strain TAC 125).